A 1134-amino-acid polypeptide reads, in one-letter code: Translation initiation factor IF-2 (1134 aa).

2 disordered regions span residues 55-465 and 491-524; these read AQKS…HIIG and LARP…QRQR. 5 stretches are compositionally biased toward polar residues: residues 56-65, 83-105, 137-147, 208-234, and 251-264; these read QKSSNSSSPP, SPPT…SSLK, PSISKNNSLKV, QIKQ…IQTN, and VQSQ…NNNL. Basic and acidic residues-rich tracts occupy residues 391 to 403 and 438 to 450; these read KRGD…KKDG and PDWD…EALR. 2 stretches are compositionally biased toward basic residues: residues 495 to 504 and 511 to 524; these read GKPKASKKSG and LRKR…QRQR. The 173-residue stretch at 626 to 798 folds into the tr-type G domain; that stretch reads RRPPVVTVMG…ILLVTEVEDL (173 aa). A G1 region spans residues 635 to 642; it reads GHVDHGKT. 635–642 is a GTP binding site; sequence GHVDHGKT. The G2 stretch occupies residues 660 to 664; the sequence is GITQH. The tract at residues 685–688 is G3; the sequence is DTPG. GTP-binding positions include 685–689 and 739–742; these read DTPGH and NKID. The tract at residues 739 to 742 is G4; it reads NKID. Residues 775–777 form a G5 region; that stretch reads SAI.

The protein belongs to the TRAFAC class translation factor GTPase superfamily. Classic translation factor GTPase family. IF-2 subfamily.

The protein localises to the cytoplasm. Its function is as follows. One of the essential components for the initiation of protein synthesis. Protects formylmethionyl-tRNA from spontaneous hydrolysis and promotes its binding to the 30S ribosomal subunits. Also involved in the hydrolysis of GTP during the formation of the 70S ribosomal complex. This is Translation initiation factor IF-2 from Prochlorococcus marinus (strain SARG / CCMP1375 / SS120).